The sequence spans 440 residues: Cobyrinate a,c-diamide synthase (440 aa).

Residues 247–428 (RIAIAYDAAF…MHLYFPSNPR (182 aa)) form the GATase cobBQ-type domain. The active-site Nucleophile is Cys-329.

This sequence belongs to the CobB/CbiA family. Requires Mg(2+) as cofactor.

The catalysed reaction is cob(II)yrinate + 2 L-glutamine + 2 ATP + 2 H2O = cob(II)yrinate a,c diamide + 2 L-glutamate + 2 ADP + 2 phosphate + 2 H(+). It functions in the pathway cofactor biosynthesis; adenosylcobalamin biosynthesis; cob(II)yrinate a,c-diamide from sirohydrochlorin (anaerobic route): step 10/10. In terms of biological role, catalyzes the ATP-dependent amidation of the two carboxylate groups at positions a and c of cobyrinate, using either L-glutamine or ammonia as the nitrogen source. This chain is Cobyrinate a,c-diamide synthase, found in Picrophilus torridus (strain ATCC 700027 / DSM 9790 / JCM 10055 / NBRC 100828 / KAW 2/3).